Consider the following 244-residue polypeptide: MMNHTPLLLGIRERLIFALDVPSRTQALEWIDQLGDAISFYKIGMELLASGEYFQVLDDLASRGKRVFVDLKFFDIPATVAGVIRRLSQWPISYCTIHGWHAPMMQAATEANTSNMHLLAVTVLTSMTREDLAKMGINREPVDVVVERALAAHMAGMSGVIASGQEAAAIRRAVGSGFSIVCPGIRTNHVPHNDQQRTIGIKAAFANGADAIVVGRPIRMAQDPQAAAEAMQTEIMTALTEPST.

Substrate is bound by residues Asp20, Lys42, 70–79, Thr125, Arg186, Gln195, Gly215, and Arg216; that span reads DLKFFDIPAT. The active-site Proton donor is the Lys72.

Belongs to the OMP decarboxylase family. Type 1 subfamily. Homodimer.

The catalysed reaction is orotidine 5'-phosphate + H(+) = UMP + CO2. The protein operates within pyrimidine metabolism; UMP biosynthesis via de novo pathway; UMP from orotate: step 2/2. Catalyzes the decarboxylation of orotidine 5'-monophosphate (OMP) to uridine 5'-monophosphate (UMP). The sequence is that of Orotidine 5'-phosphate decarboxylase from Xylella fastidiosa (strain M12).